A 450-amino-acid polypeptide reads, in one-letter code: tRNA modification GTPase MnmE (450 aa).

Lys-21, Glu-78, and Lys-117 together coordinate (6S)-5-formyl-5,6,7,8-tetrahydrofolate. The region spanning 213–376 (GHALSIVGKP…LSQKISAFFP (164 aa)) is the TrmE-type G domain. Asn-223 contributes to the K(+) binding site. GTP-binding positions include 223-228 (NAGKSS), 242-248 (SDIKGTT), and 267-270 (DTAG). Ser-227 serves as a coordination point for Mg(2+). K(+) is bound by residues Ser-242, Ile-244, and Thr-247. Thr-248 is a binding site for Mg(2+). Lys-450 lines the (6S)-5-formyl-5,6,7,8-tetrahydrofolate pocket.

The protein belongs to the TRAFAC class TrmE-Era-EngA-EngB-Septin-like GTPase superfamily. TrmE GTPase family. In terms of assembly, homodimer. Heterotetramer of two MnmE and two MnmG subunits. The cofactor is K(+).

The protein localises to the cytoplasm. Functionally, exhibits a very high intrinsic GTPase hydrolysis rate. Involved in the addition of a carboxymethylaminomethyl (cmnm) group at the wobble position (U34) of certain tRNAs, forming tRNA-cmnm(5)s(2)U34. The polypeptide is tRNA modification GTPase MnmE (Helicobacter pylori (strain Shi470)).